The chain runs to 528 residues: Phosphoenolpyruvate carboxykinase (ATP) (528 aa).

Substrate is bound by residues arginine 56, tyrosine 192, and lysine 198. ATP is bound by residues lysine 198, histidine 217, and 233–241 (GLSGTGKTT). 2 residues coordinate Mn(2+): lysine 198 and histidine 217. Aspartate 254 contacts Mn(2+). 3 residues coordinate ATP: glutamate 282, arginine 319, and threonine 444. A substrate-binding site is contributed by arginine 319.

It belongs to the phosphoenolpyruvate carboxykinase (ATP) family. Requires Mn(2+) as cofactor.

The protein localises to the cytoplasm. It carries out the reaction oxaloacetate + ATP = phosphoenolpyruvate + ADP + CO2. It participates in carbohydrate biosynthesis; gluconeogenesis. Functionally, involved in the gluconeogenesis. Catalyzes the conversion of oxaloacetate (OAA) to phosphoenolpyruvate (PEP) through direct phosphoryl transfer between the nucleoside triphosphate and OAA. The sequence is that of Phosphoenolpyruvate carboxykinase (ATP) from Bacillus cereus (strain AH187).